Reading from the N-terminus, the 212-residue chain is Ropporin-1 (212 aa).

One can recognise an RIIa domain in the interval 12 to 43 (PELPELLKQFTKAAIRTQPPDLIQWAAEYFGA). Residue Ser-56 is modified to Phosphoserine. Residues 209 to 212 (VRLE) are interaction with RHPN1.

It belongs to the ropporin family. As to quaternary structure, homodimer. Interacts with AKAP3. May interact with SPA17. Interacts with RHPN1. Interacts with FSCB; the interaction increases upon spermatozoa capacitation conditions. Interacts with CFAP61. In terms of processing, sumoylated, sumoylation decreases upon spermatozoa capacitation conditions.

The protein localises to the cell projection. It localises to the cilium. The protein resides in the flagellum. Its function is as follows. Important for male fertility. With ROPN1L, involved in fibrous sheath integrity and sperm motility, plays a role in PKA-dependent signaling processes required for spermatozoa capacitation. The polypeptide is Ropporin-1 (Ropn1) (Rattus norvegicus (Rat)).